A 178-amino-acid chain; its full sequence is Caveolin-1 (178 aa).

An N-acetylserine modification is found at serine 2. At serine 2 the chain carries Phosphoserine. Positions 2 to 94 are required for homooligomerization; the sequence is SGGKYVDSEG…WKASFTTFTV (93 aa). The Cytoplasmic segment spans residues 2–104; it reads SGGKYVDSEG…TKYWFYRLLS (103 aa). Lysine 5 bears the N6-acetyllysine; alternate mark. A Glycyl lysine isopeptide (Lys-Gly) (interchain with G-Cter in ubiquitin); alternate cross-link involves residue lysine 5. Phosphotyrosine is present on tyrosine 6. At serine 9 the chain carries Phosphoserine. A Phosphotyrosine; by ABL1 modification is found at tyrosine 14. A Phosphotyrosine modification is found at tyrosine 25. Residues lysine 26, lysine 30, lysine 39, lysine 47, and lysine 57 each participate in a glycyl lysine isopeptide (Lys-Gly) (interchain with G-Cter in ubiquitin) cross-link. The tract at residues 82–94 is interaction with CAVIN3; that stretch reads DGIWKASFTTFTV. The helical intramembrane region spans 105–125; that stretch reads TLFGIPMALIWGIYFAILSFL. Residues 126–178 lie on the Cytoplasmic side of the membrane; that stretch reads HIWAVVPCIKSFLIEIQCIGRVYSIYIHTFCDPLFEAVGKLFSNIRINMQKEI. The tract at residues 131-142 is interacts with SPRY1, SPRY2, SPRY3 and SPRY4; it reads VPCIKSFLIEIQ. Residues cysteine 133, cysteine 143, and cysteine 156 are each lipidated (S-palmitoyl cysteine). The interval 149–160 is interacts with SPRY1, SPRY2, and SPRY4; that stretch reads SIYIHTFCDPLF. An interacts with SPRY1, SPRY2, SPRY3 and SPRY4 region spans residues 167-178; that stretch reads FSNIRINMQKEI.

This sequence belongs to the caveolin family. In terms of assembly, homooligomer. Interacts with GLIPR2. Interacts with NOSTRIN. Interacts with SNAP25 and STX1A. Interacts (via the N-terminus) with DPP4; the interaction is direct. Interacts with CTNNB1, CDH1 and JUP. Interacts with PACSIN2; this interaction induces membrane tubulation. Interacts with SLC7A9. Interacts with BMX and BTK. Interacts with TGFBR1. Interacts with CAVIN3 (via leucine-zipper domain) in a cholesterol-sensitive manner. Interacts with CAVIN1. Interacts with EHD2 in a cholesterol-dependent manner. Forms a ternary complex with UBXN6 and VCP; mediates CAV1 targeting to lysosomes for degradation. Interacts with ABCG1; this interaction regulates ABCG1-mediated cholesterol efflux. Interacts with NEU3; this interaction enhances NEU3 sialidase activity within caveola. Interacts (via C-terminus) with SPRY1, SPRY2 (via C-terminus), SPRY3, and SPRY4. Interacts with IGFBP5; this interaction allows trafficking of IGFBP5 from the plasma membrane to the nucleus. Post-translationally, phosphorylated at Tyr-14 by ABL1 in response to oxidative stress. In terms of processing, ubiquitinated. Undergo monoubiquitination and multi- and/or polyubiquitination. Monoubiquitination of N-terminal lysines promotes integration in a ternary complex with UBXN6 and VCP which promotes oligomeric CAV1 targeting to lysosomes for degradation. Ubiquitinated by ZNRF1; leading to degradation and modulation of the TLR4-mediated immune response.

The protein resides in the golgi apparatus membrane. Its subcellular location is the cell membrane. It localises to the membrane. The protein localises to the caveola. It is found in the membrane raft. May act as a scaffolding protein within caveolar membranes. Forms a stable heterooligomeric complex with CAV2 that targets to lipid rafts and drives caveolae formation. Mediates the recruitment of CAVIN proteins (CAVIN1/2/3/4) to the caveolae. Interacts directly with G-protein alpha subunits and can functionally regulate their activity. Involved in the costimulatory signal essential for T-cell receptor (TCR)-mediated T-cell activation. Its binding to DPP4 induces T-cell proliferation and NF-kappa-B activation in a T-cell receptor/CD3-dependent manner. Recruits CTNNB1 to caveolar membranes and may regulate CTNNB1-mediated signaling through the Wnt pathway. Negatively regulates TGFB1-mediated activation of SMAD2/3 by mediating the internalization of TGFBR1 from membrane rafts leading to its subsequent degradation. Binds 20(S)-hydroxycholesterol (20(S)-OHC). This Dasypus novemcinctus (Nine-banded armadillo) protein is Caveolin-1 (CAV1).